The chain runs to 2227 residues: Genome polyprotein (2227 aa).

2 short sequence motifs ((L)YPX(n)L motif) span residues 167–171 (YPHGL) and 200–205 (YPVWEL). The segment at 766 to 836 (MMSRIAAGDL…PRKMKGLFSQ (71 aa)) is involved in P1-2A pentamerization. Residues 1011–1031 (TVEIINTVLCFVKSGILLYVI) form a helical membrane-spanning segment. Residues 1043 to 1070 (IGLLRVMNYADIGCSVISCGKVFSKMLE) form a membrane-penetrating ability region. An SF3 helicase domain is found at 1204–1366 (HQKLKNLGSI…SFFKNPHNDM (163 aa)). 1230–1237 (GKRGGGKS) serves as a coordination point for ATP. Residues 1462 to 1482 (WVAVGAAVGILGVLVGGWFVY) form a helical membrane-spanning segment. Tyrosine 1499 bears the O-(5'-phospho-RNA)-tyrosine mark. The Peptidase C3 domain maps to 1514 to 1728 (DPVESQSTLE…VAKLVTQEMF (215 aa)). Catalysis depends on for protease 3C activity residues histidine 1563, aspartate 1603, and cysteine 1691. In terms of domain architecture, RdRp catalytic spans 1976-2097 (DVGLDLDFSA…VFSRDVQIDN (122 aa)).

Belongs to the picornaviridae polyprotein family. In terms of assembly, homodimer. Homomultimer; probably interacts with membranes in a multimeric form. Seems to assemble into amyloid-like fibers. As to quaternary structure, interacts with host ACBD3. Homodimer. Monomer. Interacts with protein 3CD. In terms of assembly, interacts with protein 3AB. As to quaternary structure, interacts with human MAVS. Homodimer; disulfide-linked. In terms of assembly, homopentamer. Homooligomer. As to quaternary structure, interacts with capsid protein VP2. Interacts with capsid protein VP3. Interacts with capsid protein VP1. Interacts with capsid protein VP3. In terms of assembly, interacts with capsid protein VP1. Interacts with capsid protein VP2. Specific enzymatic cleavages by viral protease in vivo yield a variety of precursors and mature proteins. Polyprotein processing intermediates are produced, such as P1-2A which is a functional precursor of the structural proteins, VP0 which is a VP4-VP2 precursor, VP1-2A precursor, 3ABC precursor which is a stable and catalytically active precursor of 3A, 3B and 3C proteins, 3AB and 3CD precursors. The assembly signal 2A is removed from VP1-2A by a host protease, possibly host Cathepsin L. This cleavage occurs over a region of 3 amino-acids probably generating VP1 proteins with heterogeneous C-termini. Post-translationally, during virion maturation, immature virions are rendered infectious following cleavage of VP0 into VP4 and VP2. This maturation seems to be an autocatalytic event triggered by the presence of RNA in the capsid and is followed by a conformational change of the particle. In terms of processing, the assembly signal 2A is removed from VP1-2A by a host protease, possibly host Cathepsin L in naked virions. This cleavage does not occur in enveloped virions. This cleavage occurs over a region of 3 amino-acids probably generating VP1 proteins with heterogeneous C-termini. VPg is uridylylated prior to priming replication into VPg-pUpU. Post-translationally, unlike other picornaviruses, does not seem to be myristoylated.

It localises to the virion. The protein localises to the host endosome. Its subcellular location is the host multivesicular body. It is found in the host membrane. The protein resides in the host mitochondrion outer membrane. It localises to the host cytoplasm. The protein localises to the host cytoplasmic vesicle membrane. The catalysed reaction is RNA(n) + a ribonucleoside 5'-triphosphate = RNA(n+1) + diphosphate. The enzyme catalyses a ribonucleoside 5'-triphosphate + H2O = a ribonucleoside 5'-diphosphate + phosphate + H(+). It catalyses the reaction Selective cleavage of Gln-|-Gly bond in the poliovirus polyprotein. In other picornavirus reactions Glu may be substituted for Gln, and Ser or Thr for Gly.. Functionally, capsid proteins VP1, VP2, and VP3 form a closed capsid enclosing the viral positive strand RNA genome. All these proteins contain a beta-sheet structure called beta-barrel jelly roll. Together they form an icosahedral capsid (T=3) composed of 60 copies of each VP1, VP2, and VP3, with a diameter of approximately 300 Angstroms. VP1 is situated at the 12 fivefold axes, whereas VP2 and VP3 are located at the quasi-sixfold axes. The naked capsid interacts with the host receptor HAVCR1 to provide virion attachment to and probably entry into the target cell. VP0 precursor is a component of the immature procapsids. Its function is as follows. Plays a role in the assembly of the 12 pentamers into an icosahedral structure. Has not been detected in mature virions, supposedly owing to its small size. In terms of biological role, precursor component of immature procapsids that corresponds to an extended form of the structural protein VP1. After maturation, possibly by the host Cathepsin L, the assembly signal 2A is cleaved to give rise to the mature VP1 protein. Functionally, functions as a viroporin. Affects membrane integrity and causes an increase in membrane permeability. Involved in host intracellular membrane rearrangements probably to give rise to the viral factories. Does not disrupt calcium homeostasis or glycoprotein trafficking. Antagonizes the innate immune response of the host by suppressing IFN-beta synthesis, which it achieves by interfering with the RIG-I/IFIH1 pathway. Affects membrane integrity and causes an increase in membrane permeability. Its function is as follows. Associates with and induces structural rearrangements of intracellular membranes. Displays RNA-binding activity. In terms of biological role, the precursor 3ABC is targeted to the mitochondrial membrane where protease 3C activity cleaves and inhibits the host antiviral protein MAVS, thereby disrupting activation of IRF3 through the IFIH1/MDA5 pathway. In vivo, the protease activity of 3ABC precursor is more efficient in cleaving the 2BC precursor than that of protein 3C. The 3ABC precursor may therefore play a role in the proteolytic processing of the polyprotein. Functionally, interacts with the 3CD precursor and with RNA structures found at both the 5'- and 3'-termini of the viral genome. Since the 3AB precursor contains the hydrophobic domain 3A, it probably anchors the whole viral replicase complex to intracellular membranes on which viral RNA synthesis occurs. May serve as membrane anchor to the 3AB and 3ABC precursors via its hydrophobic domain. May interact with RNA. Its function is as follows. Acts as a primer for viral RNA replication and remains covalently bound to viral genomic RNA. VPg is uridylylated prior to priming replication into VPg-pUpU. The VPg-pUpU is then used as primer on the genomic RNA poly(A) by the RNA-dependent RNA polymerase to replicate the viral genome. In terms of biological role, cysteine protease that generates mature viral proteins from the precursor polyprotein. In addition to its proteolytic activity, it binds to viral RNA, and thus influences viral genome replication. RNA and substrate bind cooperatively to the protease. Cleaves IKBKG/NEMO to impair innate immune signaling. Cleaves host PABPC1 which may participate in the switch of viral translation to RNA synthesis. Functionally, interacts with the 3AB precursor and with RNA structures found at both the 5'- and 3'-termini of the viral genome. Disrupts TLR3 signaling by degrading the host adapter protein TICAM1/TRIF. RNA-directed RNA polymerase 3D-POL replicates genomic and antigenomic RNA by recognizing replications specific signals. The polypeptide is Genome polyprotein (Human hepatitis A virus genotype IB (isolate HM175) (HHAV)).